The primary structure comprises 369 residues: MEMMKIDPLFDRASELKAFDETKTGVKGLVDSGVSQVPRIFHHPTVKLSTPKPLPSDLLHLKTIPTIDLGGRDFQDAIKRNNAIEEIKEAAAKWGFFQVINHGVSLELLEKMKKGVRDFHEQSQEVRKEFYSRDFSRRFLYLSNFDLFSSPAANWRDTFSCTMAPDTPKPQDLPEICRDIMMEYSKQVMNLGKFLFELLSEALGLEPNHLNDMDCSKGLLMLSHYYPPCPEPDLTLGTSQHSDNSFLTVLLPDQIEGLQVRREGHWFDVPHVSGALIINIGDLLQLITNDKFISLEHRVLANRATRARVSVACFFTTGVRPNPRMYGPIRELVSEENPPKYRETTIKDYATYFNAKGLDGTSALLHFKI.

A Fe2OG dioxygenase domain is found at 217 to 318 (KGLLMLSHYY…VSVACFFTTG (102 aa)). 3 residues coordinate Fe cation: H241, D243, and H297.

Belongs to the iron/ascorbate-dependent oxidoreductase family. The cofactor is Fe cation.

The protein is 1-aminocyclopropane-1-carboxylate oxidase homolog 3 of Arabidopsis thaliana (Mouse-ear cress).